Consider the following 226-residue polypeptide: Cytidylate kinase (226 aa).

10–18 (GPASSGKST) provides a ligand contact to ATP.

It belongs to the cytidylate kinase family. Type 1 subfamily.

It is found in the cytoplasm. The catalysed reaction is CMP + ATP = CDP + ADP. The enzyme catalyses dCMP + ATP = dCDP + ADP. This chain is Cytidylate kinase, found in Streptococcus pyogenes serotype M18 (strain MGAS8232).